The sequence spans 427 residues: tRNA(Ile)-lysidine synthase (427 aa).

27-32 (SGGVDS) lines the ATP pocket.

The protein belongs to the tRNA(Ile)-lysidine synthase family.

It localises to the cytoplasm. It carries out the reaction cytidine(34) in tRNA(Ile2) + L-lysine + ATP = lysidine(34) in tRNA(Ile2) + AMP + diphosphate + H(+). Its function is as follows. Ligates lysine onto the cytidine present at position 34 of the AUA codon-specific tRNA(Ile) that contains the anticodon CAU, in an ATP-dependent manner. Cytidine is converted to lysidine, thus changing the amino acid specificity of the tRNA from methionine to isoleucine. The polypeptide is tRNA(Ile)-lysidine synthase (Streptococcus equi subsp. zooepidemicus (strain H70)).